The following is a 1906-amino-acid chain: MNFTKQPASLKYLSSMKLITSQDQDFFNFGEVSREFILEQAYVNGYDFHMLHQDMNCIGFVLSIFDEDARDEYEYKDLNCEYHENLFDAVVDSEFDKIWPHLVLKYITYYPCSLNWRGMPTIPIVYVSKHFWYELYRTGFLNKLYHCGSWTDILLLLSGDVETNPGPVETYKDLCRRKNIRKRKSRIREEIKMQQHIDKIIGQENEEYKIINVNMQGIFSFNEEKEIIKSTAWKFNSTLDKTNSIIDNLIPQLEETLAGFRKTYSKCESKIFGTISVVDVCVDLISALLQVSFAKPAMKIASLAVEVFRLIKKYVSNININIDKIKELLSYGKVALNNNNPIIHVTMQSNSPILEVLLQPNIIVSAIFIALSVVFHKKFTYKKLGIEAMIKRLGDLGRAAKGCSDLNVVLNQAITNHMLEHFGKNVLGLKQEDELKVLVEGYRNWCDEVRDLVGHKINSDGELDSKSIVENIMKDVYEIQRIENMYKKGLEISRNIAELKLPTKLTISFNTHMRYLTEVFKSVDTSGAFGNKPRTQPIVIWLFGESGRGKSGMTWPLAIDLNNSLLDNVDEMRNFSKNIYMRNVEQEFWDNYQGQNIVCXDDFGQMRDSSSNPNPEFMELIRTANIAPYPLHMAHLEDKRKTKFTSKVIIMTSNVFEQDVNSLTFPDAFRRRVDLCAEVKNKDEFTKMCWSKSAGKMVQRLDKGKVKKITGDIHSTVPYIVDLIDPESGEVYKTGLEYEEFLDMCLEKTSQCRDDSAKLNDFLMDYAEKRANRSREIDEVCARTMDEAFVDAYDDVIDVNMQIETVDEMELIEPNKLREMIEQCSNKIVYTYEGIAVKITSLAFKLATLNYEEQWEQIKEMKYYVKVSSGVNYLKRVLSQGMKVCEEWMKEMINYVKEHPWMTVSLILGTLIGILTVVGFWKWLCSGDKKKNPIKRHFINTGNVLILPDRELNTFWKNQESLDLRDMYINRVEEHIISLLKLQHKVVLVPKVTKYILTTVENHAKISDKIILITRNRYLNYQGKFVELICGEINQFFIDPETLDTNVEAFASADLKTFVQRKPIVIEGPEFVEAQTSGDQITLRKQTQKVIEAFASSDAITMARKTPKFVESDDVVEVSMQMWKDQVAQKLITNRVLTNLYKICLVKENGDMVPLLNGLFVRSNIMLAPGHLVGFLSDSDTIEIRNLFDVVFRVPWKDVKKVDVVNAFGESKEAVLLCFPKFVCQHTDLVKHFQDSESMSKFKRCEVTLPVLRYSDKMNRFLATLIECDKVEAYDRPYTLNDSSKGQYILRQGLEYTMPTTNGDCGAPLVINETQVIRKIAGIHVAGDARGKAYAESISQKDLIRAFSKIDVSMQIQLDLDQTLNFNQQQXIIPPNAEFGPEDLDFCDLPSLKMIPVGRLSEPLFEPGKTDIRPSLVYGKISEIKTKPAILRNVIVDGKIVNIKHKNLKKCAMDTPYVSKEMTEEAFQLVKSVWLKGMRNELKKVLTYEEAICGNDSSEFISAINRSSSPGFPWIRDRIKGTKGKQGWFGAEGEYILDEDVFEAVKTRIQNAKNGVRTPVMWVDTLKDERRPIEKVDQLKTRVFSNGPMDFSITFRMYYLGFIAHLMENRITNEVSIGTNVYSQDWNKTVRKLKTMGPKVIAGDFSTFDGSLNVCIMEKFADLANEFYDDGSENALIRHVLLMDVYNSTHICGDSVYMMTHSQPSGNPATTPLNCFINSMGLRMVFELCSKKYSALNGTKCYVMKDFSKHVSIVSYGDDNVINFSDEVSEWFNMETITEAFEKLGFTYTDELKGKNGEVPKWRTIEDVQYLKRKFRYDSKRKVWEAPLCMDTILEMPNWCRGSLDIQEGTKVNCENAIMELSMHEEYVFDKWSKVISKAYQKATGDCLDISTYNGYAQERFLNYYL.

Residues 513 to 692 (MRYLTEVFKS…DEFTKMCWSK (180 aa)) form the SF3 helicase domain. 544–551 (GESGRGKS) is a binding site for ATP. The segment at 1124 to 1350 (KDQVAQKLIT…KDLIRAFSKI (227 aa)) is protease. A Peptidase C3 domain is found at 1126 to 1343 (QVAQKLITNR…YAESISQKDL (218 aa)). Active-site for picornain 3C-like protease activity residues include His1171, Glu1213, and Cys1305. Positions 1638–1772 (PKVIAGDFST…NFSDEVSEWF (135 aa)) constitute a RdRp catalytic domain.

Post-translationally, specific enzymatic cleavages in vivo by the viral protease yield a variety of precursors and mature proteins.

It catalyses the reaction RNA(n) + a ribonucleoside 5'-triphosphate = RNA(n+1) + diphosphate. Replicase polyprotein contains helicase, VPg, protease and RNA-directed RNA polymerase functions. Functionally, RNA-directed RNA polymerase replicates genomic and antigenomic RNA and transcribes the vial genome. In terms of biological role, the protease generates mature viral proteins from the precursor polyprotein. Its function is as follows. VPg is covalently linked to the 5'-end of genomic RNA. The polypeptide is Replicase polyprotein (Apis mellifera (Honeybee)).